The following is a 511-amino-acid chain: Tyrosine--tRNA ligase, chloroplastic/mitochondrial (511 aa).

Residue Tyr-118 participates in L-tyrosine binding. Asp-122 lines the ATP pocket. Residues 123–132 carry the 'HIGH' region motif; it reads PTAESLHLGN. L-tyrosine is bound by residues Asp-162, Tyr-256, Gln-260, Asp-263, and Gln-282. Residues 318–322 carry the 'KMSKS' region motif; the sequence is KFGKS. Lys-321 contacts ATP. One can recognise an S4 RNA-binding domain in the interval 444 to 510; that stretch reads LSIVDLSVSA…GKKNKVVVRI (67 aa).

It belongs to the class-I aminoacyl-tRNA synthetase family.

The protein resides in the plastid. The protein localises to the chloroplast. It is found in the mitochondrion. It catalyses the reaction tRNA(Tyr) + L-tyrosine + ATP = L-tyrosyl-tRNA(Tyr) + AMP + diphosphate + H(+). Its function is as follows. Catalyzes the attachment of tyrosine to tRNA(Tyr) in a two-step reaction: tyrosine is first activated by ATP to form Tyr-AMP and then transferred to the acceptor end of tRNA(Tyr). This is Tyrosine--tRNA ligase, chloroplastic/mitochondrial from Arabidopsis thaliana (Mouse-ear cress).